The sequence spans 715 residues: NADH-ubiquinone oxidoreductase chain 5 (715 aa).

17 helical membrane-spanning segments follow: residues 1–21 (MYLS…FFGR), 30–50 (LITC…FFEV), 81–101 (LTVA…IYSI), 119–139 (LFTF…MFVG), 140–160 (WEGV…RIAA), 177–197 (FLTI…YATV), 200–220 (LAPY…LIGA), 241–261 (TPVS…YLLM), 274–294 (LLLC…IGLF), 310–330 (LGMM…FHLI), 331–351 (NHAF…HAVA), 366–386 (LPLT…FPYM), 403–423 (FSFS…FTTL), 487–507 (GFFL…FGFI), 543–563 (TLFK…ALVL), 647–667 (IVTN…FTFI), and 668–688 (SLLE…LSLT).

This sequence belongs to the complex I subunit 5 family.

The protein resides in the mitochondrion inner membrane. The catalysed reaction is a ubiquinone + NADH + 5 H(+)(in) = a ubiquinol + NAD(+) + 4 H(+)(out). Its function is as follows. Core subunit of the mitochondrial membrane respiratory chain NADH dehydrogenase (Complex I) that is believed to belong to the minimal assembly required for catalysis. Complex I functions in the transfer of electrons from NADH to the respiratory chain. The immediate electron acceptor for the enzyme is believed to be ubiquinone. The polypeptide is NADH-ubiquinone oxidoreductase chain 5 (ndh-5) (Neurospora crassa (strain ATCC 24698 / 74-OR23-1A / CBS 708.71 / DSM 1257 / FGSC 987)).